A 775-amino-acid polypeptide reads, in one-letter code: E3 ubiquitin-protein ligase ICP0 (775 aa).

The disordered stretch occupies residues 1–112 (MEPRPGASTR…PPREDGGSDE (112 aa)). Composition is skewed to basic and acidic residues over residues 10–21 (RRPEGRPQREPA) and 45–57 (VGGR…HDDD). Positions 58–69 (SASEADSTDTEL) are enriched in acidic residues. At Thr-67 the chain carries Phosphothreonine; by host; by CK1. Residues 116 to 157 (CAVCTDEIAPHLRCDTFPCMHRFCIPCMKTWMQLRNTCPLCN) form an RING-type zinc finger. The segment at 221–636 (RALSPTHPEP…HAETSGAVPA (416 aa)) is disordered. The span at 231–243 (TTDEDDDDLDDAD) shows a compositional bias: acidic residues. Positions 258–284 (RRGAAAPPVTGGASHAAPQPAAARTAP) are enriched in low complexity. Residues 293–302 (GSSNTNTTTN) are compositionally biased toward polar residues. Low complexity predominate over residues 310–321 (RQSRAAAPRGAS). Residues 322–331 (GPSGGVGVGV) are compositionally biased toward gly residues. Positions 369–390 (PASPHRPPAAPMPGSAPRPGPP) are enriched in pro residues. The segment covering 391–409 (ASAAASGPARPRAAVAPCV) has biased composition (low complexity). The span at 410-421 (RAPPPGPGPRAP) shows a compositional bias: pro residues. A compositionally biased stretch (low complexity) spans 422 to 431 (APGAEPAARP). A compositionally biased stretch (polar residues) spans 439–453 (QSHSSLAQAANQEQS). Residues 464–476 (GSGGPGVEGGHGP) show a composition bias toward gly residues. Residues 477 to 493 (SRGAAPSGAAPLPSAAS) are compositionally biased toward low complexity. The span at 509–519 (GQENPSPQSTR) shows a compositional bias: polar residues. Gly residues predominate over residues 539-549 (GPGGRGQGGPG). Residues 550–592 (TPLTSSAASASSSSASSSSAPTPAGAASSAAGAASSSASASSG) show a composition bias toward low complexity. Positions 617–626 (GPRKCARKTR) are enriched in basic residues.

Belongs to the simplexviruses ICp0 family. Interacts directly with human RCOR1/CoREST protein, leading to the disruption of the human BHC corepressor complex. Interacts with human CENPA, leading to its degradation. Interacts with human USP7; this interaction modulates ICP0 stability. Interacts with human CDC34. Interacts (when phosphorylated) with human RNF8 (via FHA domain). Interacts with human TRIM27. Interacts with human ZBP1. Interacts with host MORC3; this interaction promotes the degradation of host MORC3. Phosphorylated at Thr-67, leading to promote interaction with host RNF8. Phosphorylated by host CHEK2; leading to increased SUMO-targeted ubiquitin ligase activity of ICP0. In terms of processing, auto-ubiquitinated. Deubiquitinated by host USP7; leading to stabilize it.

The protein resides in the host cytoplasm. Its subcellular location is the host nucleus. The catalysed reaction is S-ubiquitinyl-[E2 ubiquitin-conjugating enzyme]-L-cysteine + [acceptor protein]-L-lysine = [E2 ubiquitin-conjugating enzyme]-L-cysteine + N(6)-ubiquitinyl-[acceptor protein]-L-lysine.. Its function is as follows. SUMO-targeted ubiquitin ligase that plays an essential role in nuclear antiviral defense evasion triggered by dsDNA viruses. Acts during the initial stages of lytic infection and the reactivation of latent viral genome. Prevents the antiviral effect of nuclear bodies by degrading host PML, SP100 and MORC3. Prevents antiviral response to viral DNA induced by IFI16 by degrading it. Additionally, inhibits host IRF3 nuclear signaling to prevent interferon production by the infected cells. Interestingly, the E3 ubiquitin ligase activity associated with the RING finger domain does not seem to be directly required to inhibit the activation of IRF3 but instead plays a critical role in modulating the cellular localization of ICP0. Upon reactivation of latent genome, suppresses the silencing of viral DNA by dissociating either HDAC1 or HDAC2 from the HDAC-RCOR1-REST-KDM1A complex localized at the ND10 structures and causes their dispersal. Two cellular histone ubiquitin ligases RNF8 and RNF168 are also targeted by ICP0 for degradation, leading to a loss of ubiquitinated forms of H2A, a relief of transcriptional repression, and the activation of latent viral genomes. Enhances the localization of host CCND3 to ND10 bodies that serve as precursors of replication compartments to enable efficient viral replication. Like many RING-finger E3 ubiquitin ligases, ICP0 can induce its own ubiquitination, an activity that promotes its instability due to its targeting to the 26S proteasome for degradation. ICP0 restricts this process by recruiting the cellular ubiquitin-specific protease USP7 that cleaves the anchored ubiquitin chains from ICP0, thereby promoting its stabilization. The chain is E3 ubiquitin-protein ligase ICP0 (ICP0) from Homo sapiens (Human).